A 5207-amino-acid polypeptide reads, in one-letter code: MFRLSRELLDEKGPEVLQDSLDRCYSTPSGCLELTDSCQPYRSAFYVLEQQRIGLAVDMDEIEKYQEVEEDQDPSCPRLSRELLDEKEPEVLQDSLDRCYSTPSGYLELPDLGQPYSSAVYSLEEQYLGLALDVDRTKKDQEEEEDQGPPCPRLSRELLEVVEPEVLQDSLDRCYSTPSSCLEQPDSCQPYGSSFYALEEKHVGFSLDVGEIEKKGKGKKRRGRRSKKERRRGRKEGEEDQNPPCPRLSRELLDEKGPEVLQDSLDRCYSTPSGCLELTDSCQPYRSAFYVLEQQRVGLAVDMDEIEKYQEVEEDQDPSCPRLSRELLDEKEPEVLQDSLDRCYSTPSGYLELPDLGQPYSSAVYSLEEQYLGLALDVDRTKKDQEEEEDQGPPCPRLSRELLEVVEPEVLQDSLDRCYSTPSSCLEQPDSCQPYGSSFYALEEKHVGFSLDVGEIEKKGKGKKRRGRRSKKERRRGRKEGEEDQNPPCPRLSRELLDEKGPEVLQDSLDRSYSTPSGCLELTDSCQPYRSAFYVLEQQRVGLAVDMDEIEKYQEVEEDQDPSCPRLSRELLDEKEPEVLQDSLDRCYSTPSGYLELPDLGQPYSSAVYSLEEQYLGLALDVDRTKKDQEEEEDQGPPCPRLSRELLEVVEPEVLQDSLDRCYSTPSSCLEQPDSCQPYGSSFYALEEKHVGFSLDVGEIEKKGKGKKRRGRRSKKERRRGRKEGEEDQNPPCPRLSRELLDEKGPEVLQDSLDRCYSTPSGCLELTDSCQPYRSAFYVLEQQRVGLAVDMDEIEKYQEVEEDQDPSCPRLSRELLDEKEPEVLQDSLDRCYSTPSGYLELPDLGQPYSSAVYSLEEQYLGLALDVDRTKKDQEEEEDQGPPCPRLSRELLEVVEPEVLQDSLDRCYSTPSSCLEQPDSCQPYGSSFYALEEKHVGFSLDVGEIEKKGKGKKRRGRRSKKERRRGRKEGEEDQNPPCPRLSRELLDEKGPEVLQDSLDRSYSTPSGCLELTDSCQPYRSAFYVLEQQRVGLAVDMDEIEKYQEVEEDQDPSCPRLSRELLDEKEPEVLQDSLDRCYSTPSGYLELPDLGQPYSSAVYSLEEQYLGLALDVDRTKKDQEEEEDQGPPCPRLSRELLEVVEPEVLQDSLDRCYSTPSSCLEQPDSCQPYGSSFYALEEKHVGFSLDVGEIEKKGKGKKRRGRRSKKERRRGRKEGEEDQNPPCPRLSRELLDEKGPEVLQDSLDRSYSTPSGCLELTDSCQPYRSAFYVLEQQRVGLAVDMDEIEKYQEVEEDQDPSCPRLSRELLDEKEPEVLQDSLDRCYSTPSGYLELPDLGQPYSSAVYSLEEQYLGLALDVDRTKKDQEEEEDQGPPCPRLSRELLEVVEPEVLQDSLDRCYSTPSSCLEQPDSCQPYGSSFYALEEKHVGFSLDVGEIEKKGKGKKRRGRRSKKERRRGRKEGEEDQTPPCPRLSRELLDEKGPEVLQDSLDRSYSTPSGCLELTDSCQPYRSAFYVLEQQRVGLAVDMDEIEKYQEVEEDQDPSCPRLSRELLDEKEPEVLQDSLDRCYSTPSGYLELPDLGQPYSSAVYSLEEQYLGLALDVDRTKKDQEEEEDQGPPCPRLSRELLEVVEPEVLQDSLDRCYSTPSSCLEQPDSCQPYGSSFYALEEKHVGFSLDVGEIEKKGKGKKRRGRRSKKERRRGRKEGEEDQNPPCPRLSRELLDEKGPEVLQDSLDRSYSTPSGCLELTDSCQPYRSAFYVLEQQRVGLAVDMDEIEKYQEVEEDQDPSCPRLSRELLDEKEPEVLQDSLDRCYSTPSGYLELPDLGQPYSSAVYSLEEQYLGLALDVDRTKKDQEEEEDQGPPCPRLSRELLEVVEPEVLQDSLDRCYSTPSSCLEQPDSCQPYGSSFYALEEKHVGFSLDVGEIEKKGKGKKRRGRRSKKERRRGRKEGEEDQNPPCPRLSRELLDEKGPEVLQDSLDRCYSTPSGCLELTDSCQPYRSAFYVLEQQRVGLAVDMDEIEKYQEVEEDQDPSCPRLSRELLDEKEPEVLQDSLDRCYSTPSGYLELPDLGQPYSSAVYSLEEQYLGLALDVDRTKKDQEEEEDQGPPCPRLSRELLEVVEPEVLQDSLDRCYSTPSSCLEQPDSCQPYGSSFYALEEKHVGFSLDVGEIEKKGKGKKRRGRRSKKERRRGRKEGEEDQNPPCPRLSRELLDEKGPEVLQDSLDRCYSTPSGCLELTDSCQPYRSAFYVLEQQRVGLAVDMDEIEKYQEVEEDQDPSCPRLSRELLDEKEPEVLQDSLDRCYSTPSGYLELPDLGQPYSSAVYSLEEQYLGLALDVDRTKKDQEEEEDQGPPCPRLSRELLEVVEPEVLQDSLDRCYSTPSSCLEQPDSCQPYGSSFYALEEKHVGFSLDVGEIEKKGKGKKRRGRRSKKERRRGRKEGEEDQNPPCPRLSRELLDEKGPEVLQDSLDRCYSTPSGCLELTDSCQPYRSAFYVLEQQRVGLAVDMDEIEKYQEVEEDQDPSCPRLSRELLDEKEPEVLQDSLDRCYSTPSGYLELPDLGQPYSSAVYSLEEQYLGLALDVDRTKKDQEEEEDQGPPCPRLSRELLEVVEPEVLQDSLDRCYSTPSSCLEQPDSCQPYGSSFYALEEKHVGFSLDVGEIEKKGKGKKRRGRRSKKERRRGRKEGEEDQNPPCPRLSRELLDEKGPEVLQDSLDRSYSTPSGCLELTDSCQPYRSAFYVLEQQRVGLAVDMDEIEKYQEVEEDQDPSCPRLSRELLDEKEPEVLQDSLDRCYSTPSGYLELPDLGQPYSSAVYSLEEQYLGLALDVDRTKKDQEEEEDQGPPCPRLSRELLEVVEPEVLQDSLDRCYSTPSSCLEQPDSCQPYGSSFYALEEKHVGFSLDVGEIEKKGKGKKRRGRRSKKERRRGRKEGEEDQNPPCPRLSRELLDEKGPEVLQDSLDRSYSTPSGCLELTDSCQPYRSAFYVLEQQRVGLAVDMDEIEKYQEVEEDQDPSCPRLSRELLDEKEPEVLQDSLDRCYSTPSGYLELPDLGQPYSSAVYSLEEQYLGLALDVDRTKKDQEEEEDQGPPCPRLSRELLEVVEPEVLQDSLDRCYSTPSSCLEQPDSCQPYGSSFYALEEKHVGFSLDVGEIEKKGKGKKRRGRRSKKERRRGRKEGEEDQNPPCPRLSRELLDEKGPEVLQDSLDRSYSTPSGCLELTDSCQPYRSAFYVLEQQRVGLAVDMDEIEKYQEVEEDQDPSCPRLSRELLDEKEPEVLQDSLDRCYSTPSGYLELPDLGQPYSSAVYSLEEQYLGLALDVDRTKKDQEEEEDQGPPCPRLSRELLEVVEPEVLQDSLDRCYSTPSSCLEQPDSCQPYGSSFYALEEKHVGFSLDVGEIEKKGKGKKRRGRRSKKERRRGRKEGEEDQNPPCPRLSRELLDEKGPEVLQDSLDRSYSTPSGCLELTDSCQPYRSAFYVLEQQRVGLAVDMDEIEKYQEVEEDQDPSCPRLSRELLDEKEPEVLQDSLDRCYSTPSGYLELPDLGQPYSSAVYSLEEQYLGLALDVDRTKKDQEEEEDQGPPCPRLSRELLEVVEPEVLQDSLDRCYSTPSSCLEQPDSCQPYGSSFYALEEKHVGFSLDVGEIEKKGKGKKRRGRRSKKERRRGRKEGEEDQNPPCPRLSRELLDEKGPEVLQDSLDRCYSTPSGCLELTDSCQPYRSAFYVLEQQRVGLAVDMDEIEKYQEVEEDQDPSCPRLSRELLDEKEPEVLQDSLDRCYSTPSGYLELPDLGQPYSSAVYSLEEQYLGLALDVDRTKKDQEEEEDQGPPCPRLSRELLEVVEPEVLQDSLDRCYSTPSSCLEQPDSCQPYGSSFYALEEKHVGFSLDVGEIEKKGKGKKRRGRRSKKERRRGRKEGEEDQNPPCPRLSRELLDEKGPEVLQDSLDRCYSTPSGCLELTDSCQPYRSAFYVLEQQRVGLAVDMDEIEKYQEVEEDQDPSCPRLSRELLDEKEPEVLQDSLDRCYSTPSGYLELPDLGQPYSSAVYSLEEQYLGLALDVDRTKKDQEEEEDQGPPCPRLSRELLEVVEPEVLQDSLDRCYSTPSSCLEQPDSCQPYGSSFYALEEKHVGFSLDVGEIEKKGKGKKRRGRRSKKERRRGRKEGEEDQTPPCPRLSRELLDEKGPEVLQDSLDRCYSTPSGCLELTDSCQPYRSAFYVLEQQRVGLAVDMDEIEKYQEVEEDQDPSCPRLSRELLDEKEPEVLQDSLDRCYSTPSGYLELPDLGQPYSSAVYSLEEQYLGLALDVDRTKKDQEEEEDQGPPCPRLSRELLEVVEPEVLQDSLDRCYSTPSSCLEQPDSCQPYGSSFYALEEKHVGFSLDVGEIEKKGKGKKRRGRRSKKERRRGRKEGEEDQNPPCPRLSRELLDEKEPEVLQDSLDRCYSTPSGYLELPDLGQPYSSAVYSLEEQYLGLALDVDRTKKDQEEEEDQGPPCPRLSRELLEVVEPEVLQDSLDRCYSTPSSCLEQPDSCQPYGSSFYALEEKHVGFSLDVGEIEKKGKGKKRRGRRSKKERRRGRKEGEEDQNPPCPRLSRELLDEKEPEVLQDSLDRCYSTPSGYLELPDLGQPYSSAVYSLEEQYLGLALDVDRTKKDQEEEEDQGPPCPRLSRELLEVVEPEVLQDSLDRCYSTPSSCLELTDSCQPYRSAFYVLEQQRVGLAVDMDEIEKYQEVEEDQDPSCPRLSRELLDEKEPEVLQDSLDRCYSTPSGYLELPDLGQPYSSAVYSLEEQYLGLALDVDRTKKDQEEEEDQGPPCPRLSRELLEVVEPEVLQDSLDRCYSTPSSCLEQPDSCQPYGSSFYALEEKHVGFSLDVGEIEKKGKGKKRRGRRSKKERRRGRKEGEEDQNPPCPRLSRELLDEKGPEVLQDSLDRCYSTPSGCLELTDSCQPYRSAFYVLEQQRVGLAVDMDEIEKYQEVEEDQDPSCPRLSRELLDEKEPEVLQDSLDRCYSTPSGYLELPDLGQPYSSAVYSLEEQYLGLALDVDRTKKDQEEEEDQGPPCPRLSRELLEVVEPEVLQDSLDRCYSTPSSCLEQPDSCQPYGSSFYALEEKHVGFSLDVGEIEKKGKGKKRRGRRSKKKRRRGRKEGEEDQNPPCPRLNGVLMEVEEPEVLQDSLDGCYSTPSMYFELPDSFQHYRSVFYSFEEQHISFALYVDNRFFTLTVTSLHLVFQMGVIFPQ.

Olduvai domains lie at 5–77 (SREL…PSCP), 80–135 (SREL…LDVD), 136–228 (RTKK…RSKK), 229–321 (ERRR…PSCP), 324–379 (SREL…LDVD), 380–472 (RTKK…RSKK), 473–565 (ERRR…PSCP), 568–623 (SREL…LDVD), 624–716 (RTKK…RSKK), 717–809 (ERRR…PSCP), 812–867 (SREL…LDVD), 868–960 (RTKK…RSKK), 961–1053 (ERRR…PSCP), 1056–1111 (SREL…LDVD), 1112–1204 (RTKK…RSKK), 1205–1297 (ERRR…PSCP), 1300–1355 (SREL…LDVD), 1356–1448 (RTKK…RSKK), 1449–1541 (ERRR…PSCP), 1544–1599 (SREL…LDVD), 1600–1692 (RTKK…RSKK), 1693–1785 (ERRR…PSCP), 1788–1843 (SREL…LDVD), 1844–1936 (RTKK…RSKK), 1937–2029 (ERRR…PSCP), 2032–2087 (SREL…LDVD), 2088–2180 (RTKK…RSKK), 2181–2273 (ERRR…PSCP), 2276–2331 (SREL…LDVD), 2332–2424 (RTKK…RSKK), 2425–2517 (ERRR…PSCP), 2520–2575 (SREL…LDVD), 2576–2668 (RTKK…RSKK), 2669–2761 (ERRR…PSCP), 2764–2819 (SREL…LDVD), 2820–2912 (RTKK…RSKK), 2913–3005 (ERRR…PSCP), 3008–3063 (SREL…LDVD), 3064–3156 (RTKK…RSKK), 3157–3249 (ERRR…PSCP), 3252–3307 (SREL…LDVD), 3308–3400 (RTKK…RSKK), 3401–3493 (ERRR…PSCP), 3496–3551 (SREL…LDVD), 3552–3644 (RTKK…RSKK), 3645–3737 (ERRR…PSCP), 3740–3795 (SREL…LDVD), 3796–3888 (RTKK…RSKK), 3889–3981 (ERRR…PSCP), 3984–4039 (SREL…LDVD), 4040–4132 (RTKK…RSKK), 4133–4225 (ERRR…PSCP), 4228–4283 (SREL…LDVD), 4284–4376 (RTKK…RSKK), 4377–4452 (ERRR…LDVD), 4453–4545 (RTKK…RSKK), 4546–4621 (ERRR…LDVD), 4622–4713 (RTKK…PSCP), 4716–4771 (SREL…LDVD), 4772–4864 (RTKK…RSKK), 4865–4957 (ERRR…PSCP), 4960–5015 (SREL…LDVD), 5016–5108 (RTKK…RSKK), and 5109–5207 (KRRR…IFPQ). Disordered regions lie at residues 137 to 157 (TKKD…LSRE) and 215 to 256 (KGKG…LDEK). A compositionally biased stretch (basic residues) spans 216–234 (GKGKKRRGRRSKKERRRGR). Disordered stretches follow at residues 381–403 (TKKD…RELL) and 459–513 (KGKG…DRSY). Basic residues predominate over residues 460–478 (GKGKKRRGRRSKKERRRGR). Positions 492–502 (LSRELLDEKGP) are enriched in basic and acidic residues. Disordered stretches follow at residues 625–647 (TKKD…RELL) and 703–744 (KGKG…LDEK). The segment covering 704–722 (GKGKKRRGRRSKKERRRGR) has biased composition (basic residues). Disordered regions lie at residues 869-891 (TKKD…RELL) and 947-1001 (KGKG…DRSY). Residues 948 to 966 (GKGKKRRGRRSKKERRRGR) show a composition bias toward basic residues. A compositionally biased stretch (basic and acidic residues) spans 980–990 (LSRELLDEKGP). Disordered stretches follow at residues 1113–1135 (TKKD…RELL) and 1191–1245 (KGKG…DRSY). Positions 1192–1210 (GKGKKRRGRRSKKERRRGR) are enriched in basic residues. Basic and acidic residues predominate over residues 1224–1234 (LSRELLDEKGP). Disordered regions lie at residues 1357 to 1379 (TKKD…RELL) and 1435 to 1489 (KGKG…DRSY). Residues 1436–1454 (GKGKKRRGRRSKKERRRGR) show a composition bias toward basic residues. Positions 1468–1478 (LSRELLDEKGP) are enriched in basic and acidic residues. 2 disordered regions span residues 1601–1623 (TKKD…RELL) and 1679–1733 (KGKG…DRSY). Positions 1680-1698 (GKGKKRRGRRSKKERRRGR) are enriched in basic residues. Residues 1712–1722 (LSRELLDEKGP) show a composition bias toward basic and acidic residues. 2 disordered regions span residues 1845–1867 (TKKD…RELL) and 1923–1964 (KGKG…LDEK). Residues 1924 to 1942 (GKGKKRRGRRSKKERRRGR) show a composition bias toward basic residues. Disordered stretches follow at residues 2089–2111 (TKKD…RELL) and 2167–2208 (KGKG…LDEK). Basic residues predominate over residues 2168–2186 (GKGKKRRGRRSKKERRRGR). Disordered regions lie at residues 2333 to 2355 (TKKD…RELL) and 2411 to 2452 (KGKG…LDEK). Positions 2412 to 2430 (GKGKKRRGRRSKKERRRGR) are enriched in basic residues. Disordered regions lie at residues 2577 to 2599 (TKKD…RELL) and 2655 to 2709 (KGKG…DRSY). Residues 2656–2674 (GKGKKRRGRRSKKERRRGR) show a composition bias toward basic residues. A compositionally biased stretch (basic and acidic residues) spans 2688-2698 (LSRELLDEKGP). Disordered regions lie at residues 2821-2843 (TKKD…RELL) and 2899-2953 (KGKG…DRSY). Positions 2900 to 2918 (GKGKKRRGRRSKKERRRGR) are enriched in basic residues. Residues 2932-2942 (LSRELLDEKGP) are compositionally biased toward basic and acidic residues. 2 disordered regions span residues 3065–3087 (TKKD…RELL) and 3143–3197 (KGKG…DRSY). The segment covering 3144-3162 (GKGKKRRGRRSKKERRRGR) has biased composition (basic residues). Over residues 3176 to 3186 (LSRELLDEKGP) the composition is skewed to basic and acidic residues. 2 disordered regions span residues 3309–3331 (TKKD…RELL) and 3387–3441 (KGKG…DRSY). Residues 3388–3406 (GKGKKRRGRRSKKERRRGR) are compositionally biased toward basic residues. The span at 3420 to 3430 (LSRELLDEKGP) shows a compositional bias: basic and acidic residues. Disordered stretches follow at residues 3553 to 3575 (TKKD…RELL) and 3631 to 3672 (KGKG…LDEK). Over residues 3632 to 3650 (GKGKKRRGRRSKKERRRGR) the composition is skewed to basic residues. 2 disordered regions span residues 3797-3819 (TKKD…RELL) and 3875-3916 (KGKG…LDEK). Residues 3876–3894 (GKGKKRRGRRSKKERRRGR) are compositionally biased toward basic residues. Disordered regions lie at residues 4041–4063 (TKKD…RELL) and 4119–4160 (KGKG…LDEK). Positions 4120 to 4138 (GKGKKRRGRRSKKERRRGR) are enriched in basic residues. 4 disordered regions span residues 4285–4307 (TKKD…RELL), 4361–4404 (EKKG…LDEK), 4453–4474 (RTKK…LSRE), and 4530–4573 (EKKG…LDEK). The span at 4364 to 4382 (GKGKKRRGRRSKKERRRGR) shows a compositional bias: basic residues. Over residues 4533–4551 (GKGKKRRGRRSKKERRRGR) the composition is skewed to basic residues. 2 disordered regions span residues 4773–4793 (TKKD…LSRE) and 4851–4889 (KGKG…RELL). The segment covering 4852–4870 (GKGKKRRGRRSKKERRRGR) has biased composition (basic residues). 2 disordered regions span residues 5017–5037 (TKKD…LSRE) and 5094–5128 (KKGK…CPRL). Residues 5096–5114 (GKGKKRRGRRSKKKRRRGR) show a composition bias toward basic residues.

The protein belongs to the NBPF family.

It localises to the cytoplasm. The sequence is that of NBPF family member NBPF20 from Homo sapiens (Human).